A 249-amino-acid polypeptide reads, in one-letter code: 2,3-bisphosphoglycerate-dependent phosphoglycerate mutase (249 aa).

Substrate contacts are provided by residues 8 to 15 (RHGQSVWN), 21 to 22 (TG), Arg-60, 87 to 90 (ERHY), Lys-98, 114 to 115 (RR), and 183 to 184 (GN). Residue His-9 is the Tele-phosphohistidine intermediate of the active site. Glu-87 functions as the Proton donor/acceptor in the catalytic mechanism.

This sequence belongs to the phosphoglycerate mutase family. BPG-dependent PGAM subfamily. In terms of assembly, homodimer.

The enzyme catalyses (2R)-2-phosphoglycerate = (2R)-3-phosphoglycerate. The protein operates within carbohydrate degradation; glycolysis; pyruvate from D-glyceraldehyde 3-phosphate: step 3/5. Catalyzes the interconversion of 2-phosphoglycerate and 3-phosphoglycerate. This is 2,3-bisphosphoglycerate-dependent phosphoglycerate mutase from Solidesulfovibrio magneticus (strain ATCC 700980 / DSM 13731 / RS-1) (Desulfovibrio magneticus).